A 318-amino-acid polypeptide reads, in one-letter code: MVASISPYYGVSFLEFFLVFFSRLFSGKLFYDHLYIDDIQVIVFFAIAVSCSVVGTFLVLKKMAMYANVVSHTILFGLVCVCLFTHQLIHLSMQALTIAAVSTTLLTGASIHFIRNVFKVAEEASTALVFSLLFSASLLLLVFLTRNAHVGTELVIGNADALAKTDILPIFLVLLINLGISYCFFSSFVCVSFDTIFAFSLGIRIRLVDYLIMLLLSASIVGAFKAVGVLMSLAFLLIPGLIAKLIASSVQEMMVYSMVFGGLAALIAPALSRSILSIYGIGLSTSGLAVGLLLVFYVVMLVFVCSKRAIMLRQKLDK.

The next 10 helical transmembrane spans lie at 1-21, 39-59, 64-84, 94-114, 124-144, 170-190, 196-216, 226-246, 252-272, and 285-305; these read MVASISPYYGVSFLEFFLVFF, IQVIVFFAIAVSCSVVGTFLV, AMYANVVSHTILFGLVCVCLF, QALTIAAVSTTLLTGASIHFI, ASTALVFSLLFSASLLLLVFL, IFLVLLINLGISYCFFSSFVC, IFAFSLGIRIRLVDYLIMLLL, AVGVLMSLAFLLIPGLIAKLI, EMMVYSMVFGGLAALIAPALS, and TSGLAVGLLLVFYVVMLVFVC.

It belongs to the ABC-3 integral membrane protein family.

The protein localises to the cell inner membrane. Its function is as follows. Part of an ATP-driven transport system CT_067/CT_068/CT_069/CT_070 for a metal. This is Probable metal transport system membrane protein CT_070 from Chlamydia trachomatis serovar D (strain ATCC VR-885 / DSM 19411 / UW-3/Cx).